Here is a 1892-residue protein sequence, read N- to C-terminus: Protein TIC 214 (1892 aa).

The next 6 helical transmembrane spans lie at 12 to 32 (LISLYMTIINSVVMVGLYYGF), 68 to 88 (FIAGQLMMFISIYYVPLHLAL), 89 to 109 (GKPHTITVLALPYLLFHFFWN), 128 to 148 (LSIQCVFLNNLIIQLFNHFIL), 176 to 196 (VGWLIGHILLMKWVGLVLVWI), and 225 to 245 (IFSILLFITCVYYLGRIPSPI). Residues 256 to 266 (PEEVGESEEER) are compositionally biased toward acidic residues. The segment at 256–299 (PEEVGESEEERNIEIETISEGGGANQKQGTEENTSSSLFSEEEV) is disordered. Residues 280 to 294 (NQKQGTEENTSSSLF) are compositionally biased toward polar residues. The chain crosses the membrane as a helical span at residues 1115–1135 (FYFFINFFIEKIYMDILLYII). The tract at residues 1613–1636 (SNQEKDVEEDYDKSDKKKRRKKKQ) is disordered.

It belongs to the TIC214 family. As to quaternary structure, part of the Tic complex.

The protein resides in the plastid. It is found in the chloroplast inner membrane. In terms of biological role, involved in protein precursor import into chloroplasts. May be part of an intermediate translocation complex acting as a protein-conducting channel at the inner envelope. The sequence is that of Protein TIC 214 from Gossypium hirsutum (Upland cotton).